The sequence spans 278 residues: UPF0276 protein Shew_2240 (278 aa).

The protein belongs to the UPF0276 family.

The protein is UPF0276 protein Shew_2240 of Shewanella loihica (strain ATCC BAA-1088 / PV-4).